Reading from the N-terminus, the 410-residue chain is Enterobactin exporter EntS (410 aa).

Residues methionine 1–alanine 21 lie on the Cytoplasmic side of the membrane. Residues valine 22–valine 42 form a helical membrane-spanning segment. Residues glutamine 43–glycine 55 are Periplasmic-facing. The chain crosses the membrane as a helical span at residues leucine 56 to alanine 76. Residues aspartate 77–lysine 83 lie on the Cytoplasmic side of the membrane. A helical transmembrane segment spans residues valine 84–leucine 104. The Periplasmic segment spans residues leucine 105 to serine 109. The helical transmembrane segment at leucine 110 to alanine 130 threads the bilayer. At leucine 131–arginine 156 the chain is on the cytoplasmic side. The helical transmembrane segment at leucine 157–tryptophan 177 threads the bilayer. Asparagine 178 is a topological domain (periplasmic). The chain crosses the membrane as a helical span at residues tyrosine 179–leucine 199. Residues proline 200 to arginine 218 lie on the Cytoplasmic side of the membrane. A helical membrane pass occupies residues phenylalanine 219 to alanine 233. At serine 234–serine 250 the chain is on the periplasmic side. A helical membrane pass occupies residues alanine 251–threonine 271. The Cytoplasmic segment spans residues serine 272–proline 281. The chain crosses the membrane as a helical span at residues glycine 282 to leucine 301. The Periplasmic segment spans residues methionine 302–leucine 307. Residues glycine 308–leucine 330 traverse the membrane as a helical segment. Residues glutamine 331–asparagine 350 are Cytoplasmic-facing. Residues valine 351 to valine 371 traverse the membrane as a helical segment. Position 372 (alanine 372) is a topological domain, periplasmic. A helical transmembrane segment spans residues serine 373–valine 393. Topologically, residues glutamate 394–serine 410 are cytoplasmic.

Belongs to the major facilitator superfamily. EntS (TC 2.A.1.38) family.

It is found in the cell inner membrane. In terms of biological role, component of an export pathway for enterobactin. The protein is Enterobactin exporter EntS of Shigella flexneri.